Reading from the N-terminus, the 231-residue chain is NADH-ubiquinone oxidoreductase chain 4 (231 aa).

A run of 6 helical transmembrane segments spans residues 1–21, 34–54, 61–80, 84–106, 128–148, and 169–189; these read PIAG…YGII, LFLP…LTCL, SLIA…AIII, WGLS…LFCL, ILPM…ATPP, and TIIL…HMFL.

Belongs to the complex I subunit 4 family.

The protein resides in the mitochondrion membrane. The catalysed reaction is a ubiquinone + NADH + 5 H(+)(in) = a ubiquinol + NAD(+) + 4 H(+)(out). In terms of biological role, core subunit of the mitochondrial membrane respiratory chain NADH dehydrogenase (Complex I) that is believed to belong to the minimal assembly required for catalysis. Complex I functions in the transfer of electrons from NADH to the respiratory chain. The immediate electron acceptor for the enzyme is believed to be ubiquinone. This chain is NADH-ubiquinone oxidoreductase chain 4 (MT-ND4), found in Metlapilcoatlus nummifer (Mexican jumping pitviper).